Here is a 72-residue protein sequence, read N- to C-terminus: Large ribosomal subunit protein bL31 (72 aa).

Cys16, Cys18, Cys38, and Cys41 together coordinate Zn(2+).

Belongs to the bacterial ribosomal protein bL31 family. Type A subfamily. As to quaternary structure, part of the 50S ribosomal subunit. Requires Zn(2+) as cofactor.

Its function is as follows. Binds the 23S rRNA. This is Large ribosomal subunit protein bL31 from Vibrio atlanticus (strain LGP32) (Vibrio splendidus (strain Mel32)).